The primary structure comprises 657 residues: Methionine--tRNA ligase (657 aa).

Residues 13 to 23 (YYPSGNLHIGH) carry the 'HIGH' region motif. The short motif at 308 to 312 (KMSKS) is the 'KMSKS' region element. An ATP-binding site is contributed by Lys311. The 101-residue stretch at 557-657 (DFDKVEIKAA…SAIPNGAVIK (101 aa)) folds into the tRNA-binding domain.

This sequence belongs to the class-I aminoacyl-tRNA synthetase family. MetG type 2B subfamily. In terms of assembly, homodimer.

It localises to the cytoplasm. The catalysed reaction is tRNA(Met) + L-methionine + ATP = L-methionyl-tRNA(Met) + AMP + diphosphate. Functionally, is required not only for elongation of protein synthesis but also for the initiation of all mRNA translation through initiator tRNA(fMet) aminoacylation. The polypeptide is Methionine--tRNA ligase (Staphylococcus aureus (strain MW2)).